The primary structure comprises 402 residues: MKKIVAIFLVFLGSLWAEDPVIDVVNSGVVLPKIIVKDNSNLSDENLKKSFYNIIVNDLKVSSNFEVVANATETSNYTFEYTLNKNGNTLSLNVKIKAGGSDKSEQTYTLNGLEQYPFLAHKSVKASVNALGLAPVDWMDHKILIARNSSSKKSQIIMADYTLTYQKVIVDGGLNLFPKWGNKEQTLFYYTAYDHDKPTLYRYDLNTNKASKILSSGGMVVASDVSVDGSKLLVTMAPKDQPDVYLYDLNTKNLTQLTNYSGIDVNGNFIGSDDSKVVFVSDRLGYPNIFMQDLNSNSAEQVVFHGRNNSAVSTYKDFLVYSSREPNQAGVFNIYLMSINSDYIRQLTANGKNLFPRFSSDGGSIVFIKYLGAQSALGVIRVNANKTFYFPLRVGKIQSIDW.

The first 17 residues, 1-17 (MKKIVAIFLVFLGSLWA), serve as a signal peptide directing secretion.

This sequence belongs to the TolB family. The Tol-Pal system is composed of five core proteins: the inner membrane proteins TolA, TolQ and TolR, the periplasmic protein TolB and the outer membrane protein Pal. They form a network linking the inner and outer membranes and the peptidoglycan layer.

The protein localises to the periplasm. Its function is as follows. Part of the Tol-Pal system, which plays a role in outer membrane invagination during cell division and is important for maintaining outer membrane integrity. The protein is Tol-Pal system protein TolB of Campylobacter jejuni (strain RM1221).